The primary structure comprises 500 residues: NAD(P)H-quinone oxidoreductase chain 4, chloroplastic (500 aa).

Transmembrane regions (helical) follow at residues 4 to 24 (FPWL…IFFL), 35 to 55 (YTIC…CYHF), 87 to 107 (IGPI…AWPV), 113 to 130 (LFHF…GLFS), 134 to 154 (LLLF…LLAM), 167 to 187 (FILY…GVAL), 208 to 228 (VLEI…SPII), 242 to 262 (HYST…YGLI), 272 to 292 (AHSI…IYAA), 305 to 325 (IAYS…SLTD), 330 to 350 (GALL…FLAG), 386 to 406 (LALP…GIIT), 416 to 436 (LLIT…SLSM), and 462 to 482 (LFLS…PDFV).

This sequence belongs to the complex I subunit 4 family.

The protein resides in the plastid. It localises to the chloroplast thylakoid membrane. It catalyses the reaction a plastoquinone + NADH + (n+1) H(+)(in) = a plastoquinol + NAD(+) + n H(+)(out). The catalysed reaction is a plastoquinone + NADPH + (n+1) H(+)(in) = a plastoquinol + NADP(+) + n H(+)(out). In Solanum lycopersicum (Tomato), this protein is NAD(P)H-quinone oxidoreductase chain 4, chloroplastic.